Consider the following 396-residue polypeptide: MWNSSDANFSCYHESVLGYRYVAVSWGVVVAVTGTVGNVLTLLALAIQPKLRTRFNLLIANLTLADLLYCTLLQPFSVDTYLHLHWRTGATFCRVFGLLLFASNSVSILTLCLIALGRYLLIAHPKLFPQVFSAKGIVLALVSTWVVGVASFAPLWPIYILVPVVCTCSFDRIRGRPYTTILMGIYFVLGLSSVGIFYCLIHRQVKRAAQALDQYKLRQASIHSNHVARTDEAMPGRFQELDSRLASGGPSEGISSEPVSAATTQTLEGDSSEVGDQINSKRAKQMAEKSPPEASAKAQPIKGARRAPDSSSEFGKVTRMCFAVFLCFALSYIPFLLLNILDARVQAPRVVHMLAANLTWLNGCINPVLYAAMNRQFRQAYGSILKRGPRSFHRLH.

Over 1–26 (MWNSSDANFSCYHESVLGYRYVAVSW) the chain is Extracellular. N-linked (GlcNAc...) asparagine glycans are attached at residues N3 and N8. A helical membrane pass occupies residues 27–47 (GVVVAVTGTVGNVLTLLALAI). Over 48-57 (QPKLRTRFNL) the chain is Cytoplasmic. The chain crosses the membrane as a helical span at residues 58–78 (LIANLTLADLLYCTLLQPFSV). Topologically, residues 79 to 94 (DTYLHLHWRTGATFCR) are extracellular. The chain crosses the membrane as a helical span at residues 95-115 (VFGLLLFASNSVSILTLCLIA). At 116–144 (LGRYLLIAHPKLFPQVFSAKGIVLALVST) the chain is on the cytoplasmic side. A helical transmembrane segment spans residues 145 to 165 (WVVGVASFAPLWPIYILVPVV). Topologically, residues 166–180 (CTCSFDRIRGRPYTT) are extracellular. The helical transmembrane segment at 181-201 (ILMGIYFVLGLSSVGIFYCLI) threads the bilayer. The Cytoplasmic segment spans residues 202-320 (HRQVKRAAQA…SSEFGKVTRM (119 aa)). S221 and S224 each carry phosphoserine. The interval 244–311 (RLASGGPSEG…KGARRAPDSS (68 aa)) is disordered. Low complexity predominate over residues 247-260 (SGGPSEGISSEPVS). Phosphothreonine occurs at positions 263 and 264. Residues 321–341 (CFAVFLCFALSYIPFLLLNIL) traverse the membrane as a helical segment. The Extracellular segment spans residues 342–352 (DARVQAPRVVH). A helical transmembrane segment spans residues 353-373 (MLAANLTWLNGCINPVLYAAM). Residues 374-396 (NRQFRQAYGSILKRGPRSFHRLH) are Cytoplasmic-facing.

This sequence belongs to the G-protein coupled receptor 1 family. As to quaternary structure, interacts with ARRB2 and ARR3. Post-translationally, phosphorylated by a subset of GPR84-activating ligands. Constitutively phosphorylated at Ser-221 and Ser-224 in the absence of 2-HTP. By contrast, Thr-263 and Thr-264 are phosphorylated only following prior cell treatment with 2-HTP. In terms of tissue distribution, expressed predominantly in hematopoietic tissues. High levels detected in the bone marrow and lower levels in the peripheral leukocytes and lung. Also expressed in brain, heart, muscle, colon, thymus, spleen, kidney, liver, placenta and intestine. Within the leukocyte population expression is higher in neutrophils and eosinophils relative to T- or B-lymphocytes.

It localises to the cell membrane. Its function is as follows. G protein-coupled receptor that responds endogenously to dietary fatty acids or nutrient, specifically medium-chain free fatty acid (FFA) with carbon chain lengths of C9 to C14. Capric acid (C10:0), undecanoic acid (C11:0) and lauric acid (C12:0) are the most potent agonists. In immune cells, functions as a pro-inflammatory receptor via 6-OAU and promotes the expression of pro-inflammatory mediators such as TNFalpha, IL-6 and IL-12B as well as stimulating chemotactic responses through activation of signaling mediators AKT, ERK and NF-kappa-B. In addition, triggers increased bacterial adhesion and phagocytosis in macrophages and regulates pro-inflammatory function via enhancing NLRP3 inflammasome activation. Also plays an important role in inflammation by modulating neutrophil functions. Mechanistically, promotes neutrophil chemotaxis, reactive oxygen species (ROS) production and degranulation via LYN-AKT/ERK pathway. To regulate ROS, communicates with the two formyl peptide receptors FPR2 and FPR1 to control the NADPH oxidase activity in neutrophils. The polypeptide is G-protein coupled receptor 84 (GPR84) (Homo sapiens (Human)).